Reading from the N-terminus, the 171-residue chain is 3-hydroxydecanoyl-[acyl-carrier-protein] dehydratase (171 aa).

H70 is an active-site residue.

Belongs to the thioester dehydratase family. FabA subfamily. In terms of assembly, homodimer.

The protein localises to the cytoplasm. It catalyses the reaction a (3R)-hydroxyacyl-[ACP] = a (2E)-enoyl-[ACP] + H2O. It carries out the reaction (3R)-hydroxydecanoyl-[ACP] = (2E)-decenoyl-[ACP] + H2O. The enzyme catalyses (2E)-decenoyl-[ACP] = (3Z)-decenoyl-[ACP]. It participates in lipid metabolism; fatty acid biosynthesis. Its function is as follows. Necessary for the introduction of cis unsaturation into fatty acids. Catalyzes the dehydration of (3R)-3-hydroxydecanoyl-ACP to E-(2)-decenoyl-ACP and then its isomerization to Z-(3)-decenoyl-ACP. Can catalyze the dehydratase reaction for beta-hydroxyacyl-ACPs with saturated chain lengths up to 16:0, being most active on intermediate chain length. In Pseudomonas putida (strain ATCC 700007 / DSM 6899 / JCM 31910 / BCRC 17059 / LMG 24140 / F1), this protein is 3-hydroxydecanoyl-[acyl-carrier-protein] dehydratase.